A 362-amino-acid polypeptide reads, in one-letter code: 2-oxoglutarate-dependent dioxygenase lolO2 (362 aa).

A Fe2OG dioxygenase domain is found at 199–312 (TWNYFLGQPV…RYSLVFFGHL (114 aa)). Fe cation contacts are provided by His222, Asp224, and His280. Arg303 is a 2-oxoglutarate binding site.

This sequence belongs to the iron/ascorbate-dependent oxidoreductase family. The cofactor is Fe(2+).

The protein operates within alkaloid biosynthesis. 2-oxoglutarate-dependent dioxygenase; part of the gene cluster that mediates the biosynthesis of loline alkaloids, potent insecticidal agents composed of a pyrrolizidine ring system and an uncommon ether bridge linking carbons 2 and 7. Lolines are structurally differentiated by the various modifications of the L-amino group and include norloline, loline, N-methylloline, N-acetylloline, N-acetylnorloline, and N-formylloline. The first committed step is the condensation of O-acetyl-L-homoserine (derived from L-aspartic acid) and L-proline, probably catalyzed by the gamma-type pyridoxal 5'-phosphate(PLP)-dependent enzyme lolC, to give the diamino diacid, NACPP. Ensuing cyclization, decarboxylation, and acetylation steps yield 1-exo-acetamidopyrrolizidine (AcAP). LolO is required for installation of the ether bridge upon the pathway intermediate, 1-exo-acetamidopyrrolizidine (AcAP). In sequential 2-oxoglutarate- and O(2)-consuming steps, lolO removes hydrogens from C2 and C7 of AcAP to form both carbon-oxygen bonds in N-acetylnorloline (NANL), the precursor to all other lolines. The enzymes lolD, lolE, lolF and lolT have also been proposed to be involved in the ether-bridge installation. Further processing of the exocyclic moiety of NANL by fungal N-acetamidase (LolN), methyltransferase (LolM), and cytochrome P450 (LolP) enzymes, with occasional involvement of a plant acetyltransferase, generates the other known lolines. LolN transforms NANL to norlonine which is monomethylated and dimethylated to respectively lonine and N-methyllonine (NML) by lolM. LolP catalyzes hydroxylation of the methyl group in N-methylloline (NML) and further oxygenation to N-formylloline (NFL). A plant acetyltransferase is responsible for the acetylation of loline to form N-acetylloline (NAL). LolA might interact with aspartate kinase to prevent feedback inhibition of its activity by these end products and thereby promote production of L-homoserine from L-aspartate. This chain is 2-oxoglutarate-dependent dioxygenase lolO2, found in Epichloe uncinata (Endophyte fungus).